The following is a 663-amino-acid chain: UvrABC system protein B (663 aa).

Over residues 1–10 the composition is skewed to basic and acidic residues; sequence MIDKRDDKPF. The disordered stretch occupies residues 1-23; sequence MIDKRDDKPFKLKSKYKPSGDQP. The Helicase ATP-binding domain maps to 31–418; that stretch reads DNIEGGEKAQ…TNTIIEQIIR (388 aa). 44-51 is a binding site for ATP; it reads GATGTGKT. Residues 97–120 carry the Beta-hairpin motif; it reads YYDYYQPEAYVPSSDTYIEKDSSV. The Helicase C-terminal domain maps to 435–601; that stretch reads QMDDLLGEIN…TIKKDIRGLI (167 aa). Positions 627–662 constitute a UVR domain; that stretch reads KEAINALQKQMQEAAELLDFELAAQMRDLILELKLM.

This sequence belongs to the UvrB family. As to quaternary structure, forms a heterotetramer with UvrA during the search for lesions. Interacts with UvrC in an incision complex.

The protein resides in the cytoplasm. The UvrABC repair system catalyzes the recognition and processing of DNA lesions. A damage recognition complex composed of 2 UvrA and 2 UvrB subunits scans DNA for abnormalities. Upon binding of the UvrA(2)B(2) complex to a putative damaged site, the DNA wraps around one UvrB monomer. DNA wrap is dependent on ATP binding by UvrB and probably causes local melting of the DNA helix, facilitating insertion of UvrB beta-hairpin between the DNA strands. Then UvrB probes one DNA strand for the presence of a lesion. If a lesion is found the UvrA subunits dissociate and the UvrB-DNA preincision complex is formed. This complex is subsequently bound by UvrC and the second UvrB is released. If no lesion is found, the DNA wraps around the other UvrB subunit that will check the other stand for damage. This is UvrABC system protein B from Streptococcus pyogenes serotype M1.